The chain runs to 254 residues: Alcohol dehydrogenase (254 aa).

10-33 is an NAD(+) binding site; the sequence is FVAGLGGIGLDTSREIVKSGPKNL. A substrate-binding site is contributed by S138. The Proton acceptor role is filled by Y151.

Belongs to the short-chain dehydrogenases/reductases (SDR) family. In terms of assembly, homodimer.

The enzyme catalyses a primary alcohol + NAD(+) = an aldehyde + NADH + H(+). It catalyses the reaction a secondary alcohol + NAD(+) = a ketone + NADH + H(+). The sequence is that of Alcohol dehydrogenase (Adh) from Drosophila nigra (Fruit fly).